The primary structure comprises 64 residues: Large ribosomal subunit protein bL35 (64 aa).

The span at 1-44 (MSKIKSHSGAAKRFKRTANGFKHKQSHTSHILTKKSTKRKRHLR) shows a compositional bias: basic residues. The disordered stretch occupies residues 1-48 (MSKIKSHSGAAKRFKRTANGFKHKQSHTSHILTKKSTKRKRHLRSMNQ).

This sequence belongs to the bacterial ribosomal protein bL35 family.

The polypeptide is Large ribosomal subunit protein bL35 (Marinomonas sp. (strain MWYL1)).